A 286-amino-acid chain; its full sequence is Bifunctional protein FolD (286 aa).

Residues 165–167 and S190 each bind NADP(+); that span reads GRS.

The protein belongs to the tetrahydrofolate dehydrogenase/cyclohydrolase family. Homodimer.

It catalyses the reaction (6R)-5,10-methylene-5,6,7,8-tetrahydrofolate + NADP(+) = (6R)-5,10-methenyltetrahydrofolate + NADPH. The enzyme catalyses (6R)-5,10-methenyltetrahydrofolate + H2O = (6R)-10-formyltetrahydrofolate + H(+). It participates in one-carbon metabolism; tetrahydrofolate interconversion. Catalyzes the oxidation of 5,10-methylenetetrahydrofolate to 5,10-methenyltetrahydrofolate and then the hydrolysis of 5,10-methenyltetrahydrofolate to 10-formyltetrahydrofolate. The protein is Bifunctional protein FolD of Staphylococcus aureus (strain bovine RF122 / ET3-1).